The following is a 204-amino-acid chain: CASP-like protein 2U2 (204 aa).

The Cytoplasmic segment spans residues 1–36 (MGVLGGDAHVPIGSQVSPGSVVVTNNESFGHRKLLK). A helical transmembrane segment spans residues 37 to 57 (GVDFLVRIKAFAFCLAVIVLL). The Extracellular segment spans residues 58–84 (KNNVQTTVIAPGIVLQAKYNNTKAPVS). The N-linked (GlcNAc...) asparagine glycan is linked to N77. The helical transmembrane segment at 85–105 (LLVLASICCGYAFLQAVVSLL) threads the bilayer. Topologically, residues 106 to 117 (SFIRDKRVLNNT) are cytoplasmic. A helical transmembrane segment spans residues 118 to 138 (VLAWLTFLLDQVLTYLLLGSA). Residues 139 to 170 (AATAEAAYIAKRGEDKVQWKAVCGPFKRFCDH) are Extracellular-facing. The chain crosses the membrane as a helical span at residues 171–191 (FAATVFLSFIAVIAFAVSAAI). Residues 192 to 204 (SAYYLFRKSKGFK) are Cytoplasmic-facing.

The protein belongs to the Casparian strip membrane proteins (CASP) family. Homodimer and heterodimers.

It localises to the cell membrane. The polypeptide is CASP-like protein 2U2 (Selaginella moellendorffii (Spikemoss)).